A 93-amino-acid polypeptide reads, in one-letter code: Small ribosomal subunit protein bS18 (93 aa).

This sequence belongs to the bacterial ribosomal protein bS18 family. In terms of assembly, part of the 30S ribosomal subunit. Forms a tight heterodimer with protein bS6.

Binds as a heterodimer with protein bS6 to the central domain of the 16S rRNA, where it helps stabilize the platform of the 30S subunit. In Verminephrobacter eiseniae (strain EF01-2), this protein is Small ribosomal subunit protein bS18.